Reading from the N-terminus, the 249-residue chain is Large ribosomal subunit protein uL4 (249 aa).

The protein belongs to the universal ribosomal protein uL4 family. Part of the 50S ribosomal subunit.

Functionally, one of the primary rRNA binding proteins, this protein initially binds near the 5'-end of the 23S rRNA. It is important during the early stages of 50S assembly. It makes multiple contacts with different domains of the 23S rRNA in the assembled 50S subunit and ribosome. In terms of biological role, forms part of the polypeptide exit tunnel. This chain is Large ribosomal subunit protein uL4, found in Methanoculleus marisnigri (strain ATCC 35101 / DSM 1498 / JR1).